We begin with the raw amino-acid sequence, 970 residues long: MSLPLRHALENVTSVDRILEDLLVRFIINCPNEDLSSVERELFHFEEASWFYTDFIKLMNPTLPSLKIKSFAQLIIKLCPLVWKWDIRVDEALQQFSKYKKSIPVRGAAIFNENLSKILLVQGTESDSWSFPRGKISKDENDIDCCIREVKEEIGFDLTDYIDDNQFIERNIQGKNYKIFLISGVSEVFNFKPQVRNEIDKIEWFDFKKISKTMYKSNIKYYLINSMMRPLSMWLRHQRQIKNEDQLKSYAEEQLKLLLGITKEEQIDPGRELLNMLHTAVQANSNNNAVSNGQVPSSQEHQHLKEQSGEHNQQKDQQSSFSSQQQPSIFPSLSEPFANNKNVIPPTMPMANVFMSNPQLFATMNGQPFAPFPFMLPLTNNSNSANPIPTPVPPNFNAPPNPMAFGVPNMHNLSGPAVSQPFSLPPAPLPRDSGYSSSSPGQLLDILNSKKPDSNVQSSKKPKLKILQRGTDLNSIKQNNNDETAHSNSQALLDLLKKPTSSQKTHASKPDTSFLPNDSVSGIQDAEYEDFESSSDEEVETARDERTSLNVDIGVNVMPSEKDSRRSQKEKPRSDANKTNLNASAESNSVEWGPGKSSPSTQSKQNSSVGMQNKYRQEIHIGDSDAYEVFESSSDEEDGKKLEELEQTQGNSKLISQDILKENNFQDGEVPHRDMPTESNKSINETVGLSSTTNTVKKVPKVKILKRGETFASLANDKKAFDSSSNVSSSKDLLQMLRNPISSTVSSNQQSPKSQHLSGDEEIMMMLKRNSVSKPQNSEENASTSSINDANASELLGMLKQKEKDITAPKQPYNVDSYSQKNPAKGLLNILKKNNSTGYPRTEGGPSSEMPTSMKRNDATNNQELDKNSTELLNYLKPKPLNDGYENISNKDSSHELLNILHGNKNSSTFNNNVYATDGYSLASDNNENSSNKLLNMLQNRSSAINEPNFDVRSNGTSGSNELLSILHRK.

The Nudix hydrolase domain maps to 101–228 (KSIPVRGAAI…IKYYLINSMM (128 aa)). Serine 116 carries the phosphoserine modification. Residues 134-155 (GKISKDENDIDCCIREVKEEIG) carry the Nudix box motif. Glutamate 149 and glutamate 153 together coordinate Mn(2+). Disordered regions lie at residues 287-341 (NNAV…ANNK), 417-465 (AVSQ…PKLK), and 499-692 (PTSS…LSST). Basic and acidic residues predominate over residues 300-314 (EHQHLKEQSGEHNQQ). Low complexity predominate over residues 315 to 334 (KDQQSSFSSQQQPSIFPSLS). Serine 439 carries the phosphoserine modification. Polar residues predominate over residues 499–522 (PTSSQKTHASKPDTSFLPNDSVSG). The segment covering 526–539 (AEYEDFESSSDEEV) has biased composition (acidic residues). Basic and acidic residues predominate over residues 560–576 (SEKDSRRSQKEKPRSDA). Residues 577 to 590 (NKTNLNASAESNSV) show a composition bias toward polar residues. Over residues 596 to 608 (KSSPSTQSKQNSS) the composition is skewed to low complexity. A compositionally biased stretch (acidic residues) spans 625–637 (DAYEVFESSSDEE). Threonine 677 is subject to Phosphothreonine. Residues 677–691 (TESNKSINETVGLSS) show a composition bias toward polar residues. Phosphoserine is present on residues serine 679, serine 682, serine 751, serine 771, serine 773, and serine 778. Residues 831-862 (LKKNNSTGYPRTEGGPSSEMPTSMKRNDATNN) form a disordered region.

This sequence belongs to the Nudix hydrolase family. DCP2 subfamily. In terms of assembly, component of the decapping complex composed of DCP1 and DCP2. Interacts with mRNA, LSM2, LSM4 and LSM8. The cofactor is Mn(2+).

The protein localises to the cytoplasm. It is found in the P-body. Functionally, catalytic component of the decapping complex necessary for the degradation of mRNAs, both in normal mRNA turnover and in nonsense-mediated mRNA decay. Removes the 7-methyl guanine cap structure from mRNA molecules, yielding a 5'-phosphorylated mRNA fragment and 7m-GDP. Decapping is the major pathway of mRNA degradation in yeast. It occurs through deadenylation, decapping and subsequent 5' to 3' exonucleolytic decay of the transcript body. In Saccharomyces cerevisiae (strain YJM789) (Baker's yeast), this protein is mRNA-decapping enzyme subunit 2 (DCP2).